Consider the following 209-residue polypeptide: Glycolipid transfer protein A (209 aa).

Tandem repeats lie at residues 45–55 (IKADITGNITK) and 56–66 (IRSVYESNPTK). The segment at 45–66 (IKADITGNITKIRSVYESNPTK) is 2 X 12 AA approximate tandem repeats. Beta-D-galactosyl-(1-&gt;4)-beta-D-glucosyl-(1&lt;-&gt;1)-N-[(9Z)-octadecenoyl]-sphing-4-enine is bound at residue 48-55 (DITGNITK). Beta-D-galactosyl-(1-&gt;4)-beta-D-glucosyl-(1&lt;-&gt;1)-N-[(9Z)-octadecenoyl]-sphing-4-enine contacts are provided by H140 and Y207.

It belongs to the GLTP family.

It localises to the cytoplasm. In terms of biological role, accelerates the intermembrane transfer of various glycolipids. Catalyzes the transfer of various glycosphingolipids between membranes but does not catalyze the transfer of phospholipids. May be involved in the intracellular translocation of glucosylceramides. This chain is Glycolipid transfer protein A (gltp-a), found in Xenopus laevis (African clawed frog).